We begin with the raw amino-acid sequence, 135 residues long: Ribonuclease P protein component 2 (135 aa).

This sequence belongs to the eukaryotic/archaeal RNase P protein component 2 family. As to quaternary structure, consists of a catalytic RNA component and at least 4-5 protein subunits.

The protein resides in the cytoplasm. It carries out the reaction Endonucleolytic cleavage of RNA, removing 5'-extranucleotides from tRNA precursor.. Its function is as follows. Part of ribonuclease P, a protein complex that generates mature tRNA molecules by cleaving their 5'-ends. The chain is Ribonuclease P protein component 2 from Methanosarcina barkeri (strain Fusaro / DSM 804).